A 377-amino-acid polypeptide reads, in one-letter code: MSDSYVFSSPIIIHPGSDTLQAGLADEEHPGSIFPNIVGRHKLAGLMEWVDQRVLCVGQEAIDQSATVLLRHPVWSGIVGDWEAFAAVLRHTFYRALWVAPEEHPIVVTESPHVYRSFQLRREQLTRLLFETFHAPQVAVCSEAAMSLYACGLDTGLVVSLGDFVSYVAPVHRGAIVDAGLTFLEPDGRSITEYLSRLLLERGHVFTSPEALRLVRDIKETLCYVADDVAKEAARNADSVEATYLLPNGETLVLGNERFRCPEVLFHPDLLGWESPGLTDAVCNAIMKCDPSLQAELFGNIVVTGGGSLFPGLSERLQRELEQRAPAEAPVHLLTRDDRRHLPWKGAARFARDAQFAGFALTRQAYERHGAELIYQM.

It belongs to the actin family.

Its function is as follows. May be a dominant-negative inhibitor of eukaryotic actin polymerization. The chain is Bacterial actin-related protein (barP) from Haliangium ochraceum (strain DSM 14365 / JCM 11303 / SMP-2).